Reading from the N-terminus, the 570-residue chain is Peptidyl-prolyl cis-trans isomerase-like 2 (570 aa).

The U-box domain maps to 37–110 (KRLPFNFCSL…GDYVDPVTYK (74 aa)). Disordered regions lie at residues 215 to 253 (RSERAQRADSSAVTKKADGSTTTSTQSKTASFQSGKPTP), 428 to 449 (STTLNNLETHPVNSSTNRPTPD), and 469 to 570 (KKAE…SSWD). Low complexity predominate over residues 234 to 248 (STTTSTQSKTASFQS). The 160-residue stretch at 298 to 457 (QKGYARISTT…PDIRITDVTI (160 aa)) folds into the PPIase cyclophilin-type domain. Residues 428–446 (STTLNNLETHPVNSSTNRP) are compositionally biased toward polar residues. Over residues 469–483 (KKAEEASGKNKKVDP) the composition is skewed to basic and acidic residues. 2 stretches are compositionally biased toward acidic residues: residues 484 to 497 (TEEDRETQQEDDDQ) and 535 to 550 (QEEDEIVEFVDEEPEP).

Belongs to the cyclophilin-type PPIase family. PPIL2 subfamily.

Its subcellular location is the nucleus. The enzyme catalyses [protein]-peptidylproline (omega=180) = [protein]-peptidylproline (omega=0). The catalysed reaction is S-ubiquitinyl-[E2 ubiquitin-conjugating enzyme]-L-cysteine + [acceptor protein]-L-lysine = [E2 ubiquitin-conjugating enzyme]-L-cysteine + N(6)-ubiquitinyl-[acceptor protein]-L-lysine.. In terms of biological role, may catalyze the cis-trans isomerization of proline imidic peptide bonds in oligopeptides thereby assisting the folding of proteins. May also function as a chaperone, playing a role in intracellular transport of proteins. May also have a protein ubiquitin ligase activity acting as an E3 ubiquitin protein ligase or as a ubiquitin-ubiquitin ligase promoting elongation of ubiquitin chains on proteins. This is Peptidyl-prolyl cis-trans isomerase-like 2 (cyp8) from Aspergillus oryzae (strain ATCC 42149 / RIB 40) (Yellow koji mold).